The sequence spans 296 residues: Large ribosomal subunit protein uL15m (296 aa).

A mitochondrion-targeting transit peptide spans 1–20 (MAASGGSGGKATELLRCLPR). Residues 25–66 (NLRPNPGARHREKRRGRGIHGGRKSGRGHKGETQRGNQPRLG) form a disordered region. The segment covering 32–52 (ARHREKRRGRGIHGGRKSGRG) has biased composition (basic residues).

It belongs to the universal ribosomal protein uL15 family. As to quaternary structure, component of the mitochondrial ribosome large subunit (39S) which comprises a 16S rRNA and about 50 distinct proteins.

Its subcellular location is the mitochondrion. This chain is Large ribosomal subunit protein uL15m (mrpl15), found in Xenopus laevis (African clawed frog).